We begin with the raw amino-acid sequence, 675 residues long: DNA ligase (675 aa).

Residues 36–40 (DAVYD), 85–86 (SL), and E118 each bind NAD(+). K120 (N6-AMP-lysine intermediate) is an active-site residue. NAD(+)-binding residues include R141, E178, K298, and K322. Zn(2+) contacts are provided by C416, C419, C434, and C439. Positions 598–675 (TQPQTLSGKT…SEADLLALLQ (78 aa)) constitute a BRCT domain.

The protein belongs to the NAD-dependent DNA ligase family. LigA subfamily. Mg(2+) serves as cofactor. It depends on Mn(2+) as a cofactor.

The catalysed reaction is NAD(+) + (deoxyribonucleotide)n-3'-hydroxyl + 5'-phospho-(deoxyribonucleotide)m = (deoxyribonucleotide)n+m + AMP + beta-nicotinamide D-nucleotide.. Its function is as follows. DNA ligase that catalyzes the formation of phosphodiester linkages between 5'-phosphoryl and 3'-hydroxyl groups in double-stranded DNA using NAD as a coenzyme and as the energy source for the reaction. It is essential for DNA replication and repair of damaged DNA. This chain is DNA ligase, found in Acaryochloris marina (strain MBIC 11017).